We begin with the raw amino-acid sequence, 681 residues long: Cryptochrome-1 (681 aa).

The interval 1-489 is CNT1, binds chromophores to sense blue light and mediate CRY dimerization; the sequence is MSGSVSGCGS…AKARLHEALS (489 aa). The region spanning 12–141 is the Photolyase/cryptochrome alpha/beta domain; the sequence is GCSIVWFRRD…AVRSFNADLL (130 aa). The cysteines at positions 80 and 190 are disulfide-linked. Position 235 (Tyr235) interacts with FAD. Position 238 (Asn238) interacts with Mg(2+). Arg239 contacts ATP. Lys241, Ser244, and Thr246 together coordinate Mg(2+). FAD contacts are provided by residues 247–251 and Ser293; that span reads TSFLS. His358 contacts Mg(2+). FAD contacts are provided by residues Asp359 and 390–392; that span reads DAD. 359–360 contributes to the ATP binding site; the sequence is DR. ATP is bound at residue Asp409. Residues 490–681 form a CCT1/CCE1, mediates blue light signaling region; the sequence is QMWQLEAASR…LNWRRLSQTG (192 aa). Disordered stretches follow at residues 525–598 and 616–664; these read RDIT…EPAS and STED…TSSY. Positions 583–598 are enriched in polar residues; sequence MVNTNQAQQRRAEPAS. Ser616 carries the post-translational modification Phosphoserine. Thr621 is modified (phosphothreonine).

The protein belongs to the DNA photolyase class-1 family. In terms of assembly, homodimer. Interacts with ADO1, COP1 and PHYA. Interacts specifically with the dark/far-red (Pr) state of PHYB, but not with the red light-activated (Pfr). Interacts with PIF4 and PIF5 in the nucleus in response to low blue light (LBL). Binds to SPA1 and SPA4 in response to blue light, this interaction prevents SPA1/COP1 complex formation and thus avoid COP1-dependent degradation of the transcription factor HY5 by the proteasome and promotes hypocotyl elongation. Interacts with TCP2. Binding to ATP mediates conformational changes which facilitate flavin binding. Requires FAD as cofactor. (6R)-5,10-methylene-5,6,7,8-tetrahydrofolate is required as a cofactor. Post-translationally, autophosphorylated; in response to blue light and when in complex with FAD cofactor. Kinase activity is optimal in the presence of magnesium ions, about 30 percent of the optimal activity in the presence of manganese ions, but inactive with calcium ions. Adopts an open conformation when phosphorylated upon photoexcitation and thus interacts with signaling partner proteins. Widely expressed. Expressed in the aerial tissues (e.g. cotyledons and leaf primordia), but not detected in the roots.

The protein resides in the cytoplasm. The protein localises to the nucleus. It localises to the PML body. With respect to regulation, light exposure induces a conformational change in the C-terminal domain CCT1 required for activity. In terms of biological role, photoreceptor that mediates primarily blue light inhibition of hypocotyl elongation and photoperiodic control of floral initiation, and regulates other light responses, including circadian rhythms, tropic growth, stomata opening, guard cell development, root development, bacterial and viral pathogen responses, abiotic stress responses, cell cycles, programmed cell death, apical dominance, fruit and ovule development, seed dormancy, and magnetoreception. Photoexcited cryptochromes interact with signaling partner proteins to alter gene expression at both transcriptional and post-translational levels and, consequently, regulate the corresponding metabolic and developmental programs. Blue-light absorbing flavoprotein that activates reversible flavin photoreduction via an electron transport chain comprising a tryptophan triad (W-324, W-377 and W-400), accompanied by a large conformational change upon photoexcitation, or via an alternative electron transport that involves small metabolites, including NADPH, NADH, and ATP. The half-life of the activated signaling state is about 5 minutes. Also involved in the detection of blue/green ratio in light (shade under leaf canopies) and subsequent adaptations on plant growth and development. In darkness, the dark reoxidation of flavin occurs and leads to inactivated state. Perceives low blue light (LBL) and responds by directly contacting two bHLH transcription factors, PIF4 and PIF5, at chromatin on E-box variant 5'-CA[CT]GTG-3' to promote their activity and stimulate specific gene expression to adapt global physiology (e.g. hypocotyl elongation and hyponastic growth in low blue light). When activated by high-intensity blue light, catalyzes direct enzymatic conversion of molecular oxygen O(2) to reactive oxygen species (ROS) and hydrogen peroxide H(2)O(2) in vitro. ROS accumulation upon activation by blue light leads to cell death in protoplasts. Seems essential for blue-light-triggered and singlet oxygen-mediated programmed cell death (PCD). Required for the induction of nuclear genes encoding photoprotective components by GATA24 and GATA28 in extreme light intensities that exceed the electron utilization capacity of the chloroplast. Involved in shortening the circadian clock period, especially at 27 degrees Celsius, in blue light (BL) and required to maintain clock genes expression rhythm. Mediates blue light-induced gene expression and hypocotyl elongation through the inhibition of COP1-mediated degradation of the transcription factors BIT1 and HY5 and via the activation of anion channels at the plasma membrane, probably via auxin signaling. Required for the hypocotyl hook formation in darkness. Involved in blue light-dependent stomatal opening, CHS gene expression, transpiration, inhibition of stem growth and increase of root growth, probably by regulating abscisic acid (ABA). Prevents lateral roots growth by inhibiting auxin transport. Necessary for shade avoidance syndrome (SAS), characterized by leaf hyponasty and reduced lamina/petiole ratio, when exposed to blue light attenuation. Together with phototropins, involved in phototropism regulation by various blue light fluence; blue light attenuates phototropism in high fluence rates (100 umol.m-2.s-1) but enhances phototropism in low fluence rates (&lt;1.0 umol.m-2.s-1). Required for blue/UV-A wavelengths-mediated inhibition of explants shoot regeneration in vitro (e.g. new shoot apical meristems regeneration from excised cotyledons). Modulates anthocyanin accumulation in a PHYA-dependent manner in far-red-light. Acts as a PHYA/PHYB-dependent modulator of chlorophyll accumulation in red light. Contributes to most blue light deetiolation responses. May act as a chemical magnetoreceptor, via magnetically sensitive kinetics and quantum yields of photo-induced flavin / tryptophan radical pairs. The effect of near-null magnetic field on flowering is altered by changes of blue light cycle and intensity in a CRY1/CRY2-dependent manner. Involved in the strigolactone signaling that regulates hypocotyl growth in response to blue light. Modulates temperature-dependent growth and physiology maintenance, especially at warm ambient temperatures (e.g. 27 degrees Celsius) and in white light and low-light conditions, via HFR1-dependent activity; this process requires PTAC12/HMR/PAP5 (transcriptional transactivator). Its function is as follows. Implicated in promoting R protein-mediated resistance to Pseudomonas syringae pv. tomato (Pst.) DC3000 under continuous light conditions. Promotes systemic acquired resistance (SAR) and PR gene expression triggered by P.syringae. This is Cryptochrome-1 from Arabidopsis thaliana (Mouse-ear cress).